The primary structure comprises 47 residues: Cytochrome b559 subunit beta (47 aa).

The chain crosses the membrane as a helical span at residues 23 to 39; the sequence is WLAVHALAIPSVFFLGA. Heme is bound at residue His27.

This sequence belongs to the PsbE/PsbF family. As to quaternary structure, heterodimer of an alpha subunit and a beta subunit. PSII is composed of 1 copy each of membrane proteins PsbA, PsbB, PsbC, PsbD, PsbE, PsbF, PsbH, PsbI, PsbJ, PsbK, PsbL, PsbM, PsbT, PsbX, PsbY, Psb30/Ycf12, peripheral proteins PsbO, CyanoQ (PsbQ), PsbU, PsbV and a large number of cofactors. It forms dimeric complexes. Heme b is required as a cofactor.

Its subcellular location is the cellular thylakoid membrane. Its function is as follows. This b-type cytochrome is tightly associated with the reaction center of photosystem II (PSII). PSII is a light-driven water:plastoquinone oxidoreductase that uses light energy to abstract electrons from H(2)O, generating O(2) and a proton gradient subsequently used for ATP formation. It consists of a core antenna complex that captures photons, and an electron transfer chain that converts photonic excitation into a charge separation. This is Cytochrome b559 subunit beta from Prochlorococcus marinus subsp. pastoris (strain CCMP1986 / NIES-2087 / MED4).